Reading from the N-terminus, the 227-residue chain is Phosphatidate cytidylyltransferase (227 aa).

6 helical membrane passes run 31-51 (FVIA…LVGM), 65-85 (IPYL…LTFL), 93-113 (WLIM…MIGG), 131-151 (WSGL…ASFI), 165-185 (IYLF…DLFI), and 206-226 (GVLD…FISI).

This sequence belongs to the CDS family.

The protein localises to the cell membrane. The catalysed reaction is a 1,2-diacyl-sn-glycero-3-phosphate + CTP + H(+) = a CDP-1,2-diacyl-sn-glycerol + diphosphate. The protein operates within phospholipid metabolism; CDP-diacylglycerol biosynthesis; CDP-diacylglycerol from sn-glycerol 3-phosphate: step 3/3. The protein is Phosphatidate cytidylyltransferase (cdsA) of Rickettsia felis (strain ATCC VR-1525 / URRWXCal2) (Rickettsia azadi).